A 378-amino-acid polypeptide reads, in one-letter code: MKNFILLAVSSILLVDLFPTHCGHNVDLSKAINLNGVNFNNVDASSLGAAHVGQSASRGRGLGENPDDEEGDAKKKKDGKKAEPKNPRENKLKQPGDRADGQPAGDRADGQPAGDRADGQPAGDRAAGQPAGDRADGQPAGDRADGQPAGDRADGQPAGDRADGQPAGDRAAGQPAGDRAAGQPAGDRADGQPAGDRAAGQPAGDRADGQPAGDRAAGQPAGDRADGQPAGDRAAGQPAGDRAAGQPAGDRAAGQPAGDRAAGQPAGNGAGGQAAGGNAGGGQGQNNEGANAPNEKSVKEYLDKVRATVGTEWTPCSVTCGVGVRVRRRVNAANKKPEDLTLNDLETDVCTMDKCAGIFNVVSNSLGLVILLVLALFN.

Positions 1–22 (MKNFILLAVSSILLVDLFPTHC) are cleaved as a signal peptide. The interval 51 to 295 (HVGQSASRGR…NNEGANAPNE (245 aa)) is disordered. Over residues 72 to 100 (DAKKKKDGKKAEPKNPRENKLKQPGDRAD) the composition is skewed to basic and acidic residues. A required for the binding to heparan sulfate proteoglycans (HSPGs) on the surface of host hepatocytes region spans residues 80 to 88 (KKAEPKNPR). The interval 91–95 (KLKQP) is region I; contains the proteolytic cleavage site. 19 tandem repeats follow at residues 95–103 (PGDRADGQP), 104–112 (AGDRADGQP), 113–121 (AGDRADGQP), 122–130 (AGDRAAGQP), 131–139 (AGDRADGQP), 140–148 (AGDRADGQP), 149–157 (AGDRADGQP), 158–166 (AGDRADGQP), 167–175 (AGDRAAGQP), 176–184 (AGDRAAGQP), 185–193 (AGDRADGQP), 194–202 (AGDRAAGQP), 203–211 (AGDRADGQP), 212–220 (AGDRAAGQP), 221–229 (AGDRADGQP), 230–238 (AGDRAAGQP), 239–247 (AGDRAAGQP), 248–256 (AGDRAAGQP), and 257–265 (AGDRAAGQP). Positions 95 to 265 (PGDRADGQPA…PAGDRAAGQP (171 aa)) are 19 X 9 AA tandem repeats of [PA]-G-D-R-A-[DA]-G-Q-P. Residues 266–284 (AGNGAGGQAAGGNAGGGQG) show a composition bias toward gly residues. Low complexity predominate over residues 285–295 (QNNEGANAPNE). The region spanning 304–356 (KVRATVGTEWTPCSVTCGVGVRVRRRVNAANKKPEDLTLNDLETDVCTMDKCA) is the TSP type-1 domain. Disulfide bonds link Cys-316-Cys-350 and Cys-320-Cys-355. A glycan (O-linked (Fuc) threonine) is linked at Thr-319. Cys-355 is lipidated: GPI-anchor amidated cysteine. The propeptide at 356–378 (AGIFNVVSNSLGLVILLVLALFN) is removed in mature form.

This sequence belongs to the plasmodium circumsporozoite protein family. In terms of processing, during host cell invasion, proteolytically cleaved at the cell membrane in the region I by a papain-like cysteine protease of parasite origin. Cleavage is triggered by the sporozoite contact with highly sulfated heparan sulfate proteoglycans (HSPGs) present on the host hepatocyte cell surface. Cleavage exposes the TSP type-1 (TSR) domain and is required for productive invasion of host hepatocytes but not for adhesion to the host cell membrane. Cleavage is dispensable for sporozoite development in the oocyst, motility and for traversal of host and vector cells. O-glycosylated; maybe by POFUT2.

It is found in the cell membrane. It localises to the cytoplasm. Essential sporozoite protein. In the mosquito vector, required for sporozoite development in the oocyst, migration through the vector hemolymph and entry into the vector salivary glands. In the vertebrate host, required for sporozoite migration through the host dermis and infection of host hepatocytes. Binds to highly sulfated heparan sulfate proteoglycans (HSPGs) on the surface of host hepatocytes. In terms of biological role, in the vertebrate host, binds to highly sulfated heparan sulfate proteoglycans (HSPGs) on the surface of host hepatocytes and is required for sporozoite invasion of the host hepatocytes. The protein is Circumsporozoite protein of Plasmodium vivax (strain Belem).